Here is a 289-residue protein sequence, read N- to C-terminus: Release factor glutamine methyltransferase (289 aa).

S-adenosyl-L-methionine-binding positions include 122-126, Asp-145, Trp-174, and Asn-189; that span reads GVGSG. Residue 189-192 coordinates substrate; the sequence is NPPY.

This sequence belongs to the protein N5-glutamine methyltransferase family. PrmC subfamily.

The enzyme catalyses L-glutaminyl-[peptide chain release factor] + S-adenosyl-L-methionine = N(5)-methyl-L-glutaminyl-[peptide chain release factor] + S-adenosyl-L-homocysteine + H(+). In terms of biological role, methylates the class 1 translation termination release factors RF1/PrfA and RF2/PrfB on the glutamine residue of the universally conserved GGQ motif. In Caulobacter vibrioides (strain ATCC 19089 / CIP 103742 / CB 15) (Caulobacter crescentus), this protein is Release factor glutamine methyltransferase.